The following is an 856-amino-acid chain: Envelope glycoprotein gp160 (856 aa).

Residues 1–31 (MKVKGIQGNWQNWWKWGTLILGLVIICSAAE) form the signal peptide. At 32-684 (NLWVTVYYGV…ISNWLWYIKI (653 aa)) the chain is on the extracellular side. A disulfide bond links C53 and C73. N87, N132, N138, N152, N156, N183, and N198 each carry an N-linked (GlcNAc...) asparagine; by host glycan. Cystine bridges form between C118-C206, C125-C197, C130-C153, C219-C248, and C229-C240. The segment at 130 to 152 (CHNITIKDNNTNVDTEMKEEIKN) is V1. The interval 153-197 (CSYNMTTELRDKQRKIYSLFYRLDIVPIGGNSSNGDSSKYRLINC) is V2. N242, N263, N277, N294, N302, N332, N339, N355, and N364 each carry an N-linked (GlcNAc...) asparagine; by host glycan. Residues 297–330 (CMRPNNNTRKSISIGPGRAFFATGDIIGDIRQAH) are V3. C297 and C331 are disulfide-bonded. The CD4-binding loop stretch occupies residues 365 to 375 (SSGGDVEITTH). Intrachain disulfides connect C379–C445 and C386–C418. A V4 region spans residues 386 to 418 (CNTSGLFNGTWLNGTSNNTWKIDTVNDTIILPC). N-linked (GlcNAc...) asparagine; by host glycans are attached at residues N387, N393, N398, N402, N411, N448, N461, N462, and N465. 2 V5 regions span residues 461 to 471 (NNTSNETFRPG) and 463 to 471 (TSNETFRPG). Residues 512–532 (AIGMGAFFLGFLGAAGSTMGA) are fusion peptide. The segment at 574–592 (KQLQARILAVERYLKDQQL) is immunosuppression. Residues C598 and C604 are joined by a disulfide bond. N611, N616, and N637 each carry an N-linked (GlcNAc...) asparagine; by host glycan. A coiled-coil region spans residues 633–667 (KEVSNYTQVIYNLIEESQTQQEINERDLLALDKWA). The MPER; binding to GalCer stretch occupies residues 662–683 (ALDKWANLWNWFDISNWLWYIK). The chain crosses the membrane as a helical span at residues 685 to 705 (FIMIVGGLIGLRIVFAVLSII). The Cytoplasmic segment spans residues 706–856 (NRVRQGYSPL…IRQGLERALL (151 aa)). The YXXL motif; contains endocytosis signal motif lies at 712–715 (YSPL). Residues 720–742 (LTHHQREPDRPERIEEGGGEQDR) form a disordered region. Residues 723 to 742 (HQREPDRPERIEEGGGEQDR) show a composition bias toward basic and acidic residues. The S-palmitoyl cysteine; by host moiety is linked to residue C764. The short motif at 855–856 (LL) is the Di-leucine internalization motif element.

Belongs to the HIV-1 env protein family. In terms of assembly, the mature envelope protein (Env) consists of a homotrimer of non-covalently associated gp120-gp41 heterodimers. The resulting complex protrudes from the virus surface as a spike. There seems to be as few as 10 spikes on the average virion. Interacts with host CD4, CCR5 and CXCR4. Gp120 also interacts with the C-type lectins CD209/DC-SIGN and CLEC4M/DC-SIGNR (collectively referred to as DC-SIGN(R)). Gp120 and gp41 interact with GalCer. Gp120 interacts with host ITGA4/ITGB7 complex; on CD4+ T-cells, this interaction results in rapid activation of integrin ITGAL/LFA-1, which facilitates efficient cell-to-cell spreading of HIV-1. Gp120 interacts with cell-associated heparan sulfate; this interaction increases virus infectivity on permissive cells and may be involved in infection of CD4- cells. The mature envelope protein (Env) consists of a homotrimer of non-covalently associated gp120-gp41 heterodimers. The resulting complex protrudes from the virus surface as a spike. There seems to be as few as 10 spikes on the average virion. Highly glycosylated by host. The high number of glycan on the protein is reffered to as 'glycan shield' because it contributes to hide protein sequence from adaptive immune system. In terms of processing, palmitoylation of the transmembrane protein and of Env polyprotein (prior to its proteolytic cleavage) is essential for their association with host cell membrane lipid rafts. Palmitoylation is therefore required for envelope trafficking to classical lipid rafts, but not for viral replication. Post-translationally, specific enzymatic cleavages in vivo yield mature proteins. Envelope glycoproteins are synthesized as an inactive precursor that is heavily N-glycosylated and processed likely by host cell furin in the Golgi to yield the mature SU and TM proteins. The cleavage site between SU and TM requires the minimal sequence [KR]-X-[KR]-R. About 2 of the 9 disulfide bonds of gp41 are reduced by P4HB/PDI, following binding to CD4 receptor.

It is found in the virion membrane. The protein localises to the host cell membrane. It localises to the host endosome membrane. Functionally, oligomerizes in the host endoplasmic reticulum into predominantly trimers. In a second time, gp160 transits in the host Golgi, where glycosylation is completed. The precursor is then proteolytically cleaved in the trans-Golgi and thereby activated by cellular furin or furin-like proteases to produce gp120 and gp41. Attaches the virus to the host lymphoid cell by binding to the primary receptor CD4. This interaction induces a structural rearrangement creating a high affinity binding site for a chemokine coreceptor like CXCR4 and/or CCR5. Acts as a ligand for CD209/DC-SIGN and CLEC4M/DC-SIGNR, which are respectively found on dendritic cells (DCs), and on endothelial cells of liver sinusoids and lymph node sinuses. These interactions allow capture of viral particles at mucosal surfaces by these cells and subsequent transmission to permissive cells. HIV subverts the migration properties of dendritic cells to gain access to CD4+ T-cells in lymph nodes. Virus transmission to permissive T-cells occurs either in trans (without DCs infection, through viral capture and transmission), or in cis (following DCs productive infection, through the usual CD4-gp120 interaction), thereby inducing a robust infection. In trans infection, bound virions remain infectious over days and it is proposed that they are not degraded, but protected in non-lysosomal acidic organelles within the DCs close to the cell membrane thus contributing to the viral infectious potential during DCs' migration from the periphery to the lymphoid tissues. On arrival at lymphoid tissues, intact virions recycle back to DCs' cell surface allowing virus transmission to CD4+ T-cells. Its function is as follows. Acts as a class I viral fusion protein. Under the current model, the protein has at least 3 conformational states: pre-fusion native state, pre-hairpin intermediate state, and post-fusion hairpin state. During fusion of viral and target intracellular membranes, the coiled coil regions (heptad repeats) assume a trimer-of-hairpins structure, positioning the fusion peptide in close proximity to the C-terminal region of the ectodomain. The formation of this structure appears to drive apposition and subsequent fusion of viral and target cell membranes. Complete fusion occurs in host cell endosomes and is dynamin-dependent, however some lipid transfer might occur at the plasma membrane. The virus undergoes clathrin-dependent internalization long before endosomal fusion, thus minimizing the surface exposure of conserved viral epitopes during fusion and reducing the efficacy of inhibitors targeting these epitopes. Membranes fusion leads to delivery of the nucleocapsid into the cytoplasm. This chain is Envelope glycoprotein gp160, found in Homo sapiens (Human).